Reading from the N-terminus, the 860-residue chain is Leucine--tRNA ligase (860 aa).

The 'HIGH' region motif lies at 42–52 (PYPSGRLHMGH). The 'KMSKS' region motif lies at 619–623 (KMSKS). Lysine 622 contributes to the ATP binding site.

The protein belongs to the class-I aminoacyl-tRNA synthetase family.

The protein localises to the cytoplasm. The catalysed reaction is tRNA(Leu) + L-leucine + ATP = L-leucyl-tRNA(Leu) + AMP + diphosphate. The chain is Leucine--tRNA ligase from Salmonella enteritidis PT4 (strain P125109).